We begin with the raw amino-acid sequence, 351 residues long: Carbamoyl phosphate synthase small chain (351 aa).

Positions 1–171 are CPSase; sequence MKGIIYLEDG…IIHIAGNGNK (171 aa). L-glutamine is bound by residues Ser-45, Gly-219, and Gly-221. A Glutamine amidotransferase type-1 domain is found at 171 to 351; that stretch reads KVAVMDFGIK…TYLFDQFVNL (181 aa). Residue Cys-246 is the Nucleophile of the active site. The L-glutamine site is built by Leu-247, Gln-250, Asn-288, Gly-290, and Tyr-291. Active-site residues include His-331 and Glu-333.

The protein belongs to the CarA family. Composed of two chains; the small (or glutamine) chain promotes the hydrolysis of glutamine to ammonia, which is used by the large (or ammonia) chain to synthesize carbamoyl phosphate. Tetramer of heterodimers (alpha,beta)4.

It catalyses the reaction hydrogencarbonate + L-glutamine + 2 ATP + H2O = carbamoyl phosphate + L-glutamate + 2 ADP + phosphate + 2 H(+). It carries out the reaction L-glutamine + H2O = L-glutamate + NH4(+). The protein operates within amino-acid biosynthesis; L-arginine biosynthesis; carbamoyl phosphate from bicarbonate: step 1/1. It participates in pyrimidine metabolism; UMP biosynthesis via de novo pathway; (S)-dihydroorotate from bicarbonate: step 1/3. Its function is as follows. Small subunit of the glutamine-dependent carbamoyl phosphate synthetase (CPSase). CPSase catalyzes the formation of carbamoyl phosphate from the ammonia moiety of glutamine, carbonate, and phosphate donated by ATP, constituting the first step of 2 biosynthetic pathways, one leading to arginine and/or urea and the other to pyrimidine nucleotides. The small subunit (glutamine amidotransferase) binds and cleaves glutamine to supply the large subunit with the substrate ammonia. The chain is Carbamoyl phosphate synthase small chain from Clostridium acetobutylicum (strain ATCC 824 / DSM 792 / JCM 1419 / IAM 19013 / LMG 5710 / NBRC 13948 / NRRL B-527 / VKM B-1787 / 2291 / W).